The primary structure comprises 423 residues: Glutamate-1-semialdehyde 2,1-aminomutase (423 aa).

Position 259 is an N6-(pyridoxal phosphate)lysine (K259).

Belongs to the class-III pyridoxal-phosphate-dependent aminotransferase family. HemL subfamily. It depends on pyridoxal 5'-phosphate as a cofactor.

Its subcellular location is the cytoplasm. It carries out the reaction (S)-4-amino-5-oxopentanoate = 5-aminolevulinate. It functions in the pathway porphyrin-containing compound metabolism; protoporphyrin-IX biosynthesis; 5-aminolevulinate from L-glutamyl-tRNA(Glu): step 2/2. In Methanobrevibacter smithii (strain ATCC 35061 / DSM 861 / OCM 144 / PS), this protein is Glutamate-1-semialdehyde 2,1-aminomutase.